The sequence spans 117 residues: Large ribosomal subunit protein uL18 (117 aa).

The protein belongs to the universal ribosomal protein uL18 family. In terms of assembly, part of the 50S ribosomal subunit; part of the 5S rRNA/L5/L18/L25 subcomplex. Contacts the 5S and 23S rRNAs.

Its function is as follows. This is one of the proteins that bind and probably mediate the attachment of the 5S RNA into the large ribosomal subunit, where it forms part of the central protuberance. In Aliivibrio fischeri (strain ATCC 700601 / ES114) (Vibrio fischeri), this protein is Large ribosomal subunit protein uL18.